A 563-amino-acid polypeptide reads, in one-letter code: O-fucosyltransferase 14 (563 aa).

Residues methionine 1 to serine 16 are compositionally biased toward low complexity. The tract at residues methionine 1–asparagine 25 is disordered. Residues isoleucine 73–tyrosine 93 traverse the membrane as a helical; Signal-anchor for type II membrane protein segment. Residues asparagine 135, asparagine 140, and asparagine 339 are each glycosylated (N-linked (GlcNAc...) asparagine). Substrate-binding positions include histidine 412 to arginine 414 and threonine 528 to phenylalanine 529.

The protein belongs to the glycosyltransferase GT106 family.

The protein localises to the membrane. It functions in the pathway glycan metabolism. This chain is O-fucosyltransferase 14, found in Arabidopsis thaliana (Mouse-ear cress).